The chain runs to 354 residues: Arginase-2, mitochondrial (354 aa).

Residues 1–22 (MSLRSHLSRLLRTQVHSVRKKS) constitute a mitochondrion transit peptide. Positions 120, 143, 145, and 147 each coordinate Mn(2+). Substrate-binding positions include 145–149 (HADIN), 156–158 (SGN), and D202. The Mn(2+) site is built by D251 and D253. Positions 265 and 296 each coordinate substrate. The disordered stretch occupies residues 332 to 354 (IVYDQLPTPSSPDESESEERVRI).

It belongs to the arginase family. As to quaternary structure, homotrimer. Mn(2+) is required as a cofactor.

The protein resides in the mitochondrion. It catalyses the reaction L-arginine + H2O = urea + L-ornithine. Its pathway is nitrogen metabolism; urea cycle; L-ornithine and urea from L-arginine: step 1/1. In terms of biological role, may play a role in the regulation of extra-urea cycle arginine metabolism and also in down-regulation of nitric oxide synthesis. Extrahepatic arginase functions to regulate L-arginine bioavailability to nitric oxid synthase (NOS). Arginine metabolism is a critical regulator of innate and adaptive immune responses. Seems to be involved in negative regulation of the survival capacity of activated T cells. May suppress inflammation-related signaling in asthmatic airway epithelium. May play a role in promoting prenatal immune suppression. Regulates RPS6KB1 signaling, which promotes endothelial cell senescence and inflammation and implicates NOS3/eNOS dysfunction. Can inhibit endothelial autophagy independently of its enzymatic activity implicating mTORC2 signaling. Involved in vascular smooth muscle cell senescence and apoptosis independently of its enzymatic activity. This is Arginase-2, mitochondrial (ARG2) from Bos taurus (Bovine).